A 132-amino-acid chain; its full sequence is Ribosome-binding factor A (132 aa).

The protein belongs to the RbfA family. Monomer. Binds 30S ribosomal subunits, but not 50S ribosomal subunits or 70S ribosomes.

Its subcellular location is the cytoplasm. In terms of biological role, one of several proteins that assist in the late maturation steps of the functional core of the 30S ribosomal subunit. Associates with free 30S ribosomal subunits (but not with 30S subunits that are part of 70S ribosomes or polysomes). Required for efficient processing of 16S rRNA. May interact with the 5'-terminal helix region of 16S rRNA. This Caldicellulosiruptor bescii (strain ATCC BAA-1888 / DSM 6725 / KCTC 15123 / Z-1320) (Anaerocellum thermophilum) protein is Ribosome-binding factor A.